A 316-amino-acid polypeptide reads, in one-letter code: Phosducin-like protein 1 (316 aa).

The tract at residues 1–61 is disordered; the sequence is MEQNILNSIL…EDGDKEYEVD (61 aa). The span at 12–41 shows a compositional bias: basic and acidic residues; that stretch reads KFGDGDQERSDIRHNDSGDENDNHSDHEGN. Over residues 49 to 61 the composition is skewed to acidic residues; the sequence is EGNEDGDKEYEVD. A Phosducin domain is found at 95–290; sequence SDYAEHREKQ…LLSSYDIIPN (196 aa). Residues 102 to 156 are a coiled coil; that stretch reads EKQKQKYLQKKYETQKMLEKMCFTTRDQPPPTEEENQLDSDDDDLERIRKARMEQ. A thioredoxin fold region spans residues 175 to 316; it reads FGYFKQIDSS…RPESDDDNDD (142 aa). Positions 293-316 are disordered; that stretch reads KAKNSNWETSLSRKRPESDDDNDD.

Belongs to the phosducin family.

It localises to the cytoplasm. Required for normal chemotaxis in response to cAMP and folate. Required for the heterodimerization of the G protein beta and gamma subunits gpbA and gpgA, which is itself thought to be necessary for prenylation of the gamma subunit gpgA and its association with plasma membranes. This Dictyostelium discoideum (Social amoeba) protein is Phosducin-like protein 1 (phlp1).